The following is a 185-amino-acid chain: MSGIDLNDIKRRMDGAINAFKSDIASLRTGRASANILDPVTIDAYGSRVPLNQVANITVPEPRMLGVNIWDKSMVNAVDRAIRESNLGLNPIVDGQNLRIPLPELNEERRKSLVKVAHEYSEKAKVAIRHVRRDGMDGLKKAEKDGDIGQDESRGQSEKVQKMTDDTISEIDRLLAEKEKEIMQV.

Residues Asp-137–Asp-166 form a disordered region.

The protein belongs to the RRF family.

It is found in the cytoplasm. Its function is as follows. Responsible for the release of ribosomes from messenger RNA at the termination of protein biosynthesis. May increase the efficiency of translation by recycling ribosomes from one round of translation to another. This is Ribosome-recycling factor from Agrobacterium fabrum (strain C58 / ATCC 33970) (Agrobacterium tumefaciens (strain C58)).